Consider the following 886-residue polypeptide: Coatomer subunit gamma (886 aa).

HEAT repeat units follow at residues 66 to 103 (VEAT…SSDE), 288 to 325 (RELT…THPM), 327 to 359 (VTNC…TGNE), 360 to 397 (SSVE…KFPL), and 472 to 509 (SDPS…MVES). The interval 592–613 (SQPLAEKKAQGKKPTGLGAPPA) is disordered.

The protein belongs to the COPG family. As to quaternary structure, oligomeric complex that consists of at least the alpha, beta, beta', gamma, delta, epsilon and zeta subunits.

The protein localises to the cytoplasm. The protein resides in the golgi apparatus membrane. Its subcellular location is the cytoplasmic vesicle. It is found in the COPI-coated vesicle membrane. In terms of biological role, the coatomer is a cytosolic protein complex that binds to dilysine motifs and reversibly associates with Golgi non-clathrin-coated vesicles, which further mediate biosynthetic protein transport from the ER, via the Golgi up to the trans Golgi network. Coatomer complex is required for budding from Golgi membranes, and is essential for the retrograde Golgi-to-ER transport of dilysine-tagged proteins. The chain is Coatomer subunit gamma from Arabidopsis thaliana (Mouse-ear cress).